Reading from the N-terminus, the 201-residue chain is Dephospho-CoA kinase (201 aa).

Residues 4-201 (IIGITGGIAS…LEGGRQDDRD (198 aa)) enclose the DPCK domain. Position 12–17 (12–17 (ASGKST)) interacts with ATP.

The protein belongs to the CoaE family.

The protein resides in the cytoplasm. The catalysed reaction is 3'-dephospho-CoA + ATP = ADP + CoA + H(+). Its pathway is cofactor biosynthesis; coenzyme A biosynthesis; CoA from (R)-pantothenate: step 5/5. Its function is as follows. Catalyzes the phosphorylation of the 3'-hydroxyl group of dephosphocoenzyme A to form coenzyme A. The polypeptide is Dephospho-CoA kinase (Streptococcus pneumoniae (strain ATCC BAA-255 / R6)).